A 163-amino-acid polypeptide reads, in one-letter code: Photosystem II extrinsic protein V (163 aa).

A signal peptide spans 1–26 (MLRKLILITVATVFFACQLLVNPVSA). Positions 63, 66, 67, and 118 each coordinate heme c.

It belongs to the cytochrome c family. PsbV subfamily. PSII is composed of 1 copy each of membrane proteins PsbA, PsbB, PsbC, PsbD, PsbE, PsbF, PsbH, PsbI, PsbJ, PsbK, PsbL, PsbM, PsbT, PsbX, PsbY, PsbZ, Psb30/Ycf12, peripheral proteins PsbO, CyanoQ (PsbQ), PsbU, PsbV and a large number of cofactors. It forms dimeric complexes. Requires heme c as cofactor.

It is found in the cellular thylakoid membrane. In terms of biological role, one of the extrinsic, lumenal subunits of photosystem II (PSII). PSII is a light-driven water plastoquinone oxidoreductase, using light energy to abstract electrons from H(2)O, generating a proton gradient subsequently used for ATP formation. The extrinsic proteins stabilize the structure of photosystem II oxygen-evolving complex (OEC), the ion environment of oxygen evolution and protect the OEC against heat-induced inactivation. Low-potential cytochrome c that plays a role in the OEC of PSII. In Aphanothece halophytica, this protein is Photosystem II extrinsic protein V.